A 93-amino-acid polypeptide reads, in one-letter code: Small ribosomal subunit protein uS19 (93 aa).

The protein belongs to the universal ribosomal protein uS19 family.

In terms of biological role, protein S19 forms a complex with S13 that binds strongly to the 16S ribosomal RNA. This Caldanaerobacter subterraneus subsp. tengcongensis (strain DSM 15242 / JCM 11007 / NBRC 100824 / MB4) (Thermoanaerobacter tengcongensis) protein is Small ribosomal subunit protein uS19.